A 429-amino-acid polypeptide reads, in one-letter code: Zygotic gap protein knirps (429 aa).

The nuclear receptor DNA-binding region spans 2 to 78 (NQTCKVCGEP…VGMSKGGSRY (77 aa)). NR C4-type zinc fingers lie at residues 5–25 (CKVC…CEGC) and 42–66 (CKNE…LRKC). Positions 112 to 126 (SVGGAPSASSPVGSP) are enriched in low complexity. Disordered regions lie at residues 112–148 (SVGG…QQQQ), 223–250 (QSVD…SSAR), 338–357 (TSRS…QEVE), and 375–397 (SSSS…AEVK). Composition is skewed to polar residues over residues 225–237 (VDSV…FSPA) and 338–349 (TSRSSVHSFNDS). The span at 375 to 393 (SSSSSSHSAAHSPNTTTAH) shows a compositional bias: low complexity.

This sequence belongs to the nuclear hormone receptor family. NR0 subfamily.

Its subcellular location is the nucleus. Functionally, transcriptional repressor. Binds to multiple sites in the eve stripe 3 enhancer element. Plays an essential role in the segmentation process both by refining the expression patterns of gap genes and by establishing pair-rules stripes of gene expression. The protein is Zygotic gap protein knirps (kni) of Drosophila melanogaster (Fruit fly).